Consider the following 404-residue polypeptide: S-adenosylmethionine synthase (404 aa).

His-16 is an ATP binding site. Position 18 (Asp-18) interacts with Mg(2+). A K(+)-binding site is contributed by Glu-44. Positions 57 and 100 each coordinate L-methionine. Residues 100 to 110 (QSPEINQGVAR) form a flexible loop region. ATP-binding positions include 177–179 (DGK), Asp-257, 263–264 (RK), Ala-280, and Lys-284. Position 257 (Asp-257) interacts with L-methionine. Lys-288 provides a ligand contact to L-methionine.

This sequence belongs to the AdoMet synthase family. As to quaternary structure, homotetramer; dimer of dimers. The cofactor is Mg(2+). K(+) serves as cofactor.

The protein localises to the cytoplasm. The catalysed reaction is L-methionine + ATP + H2O = S-adenosyl-L-methionine + phosphate + diphosphate. It functions in the pathway amino-acid biosynthesis; S-adenosyl-L-methionine biosynthesis; S-adenosyl-L-methionine from L-methionine: step 1/1. In terms of biological role, catalyzes the formation of S-adenosylmethionine (AdoMet) from methionine and ATP. The overall synthetic reaction is composed of two sequential steps, AdoMet formation and the subsequent tripolyphosphate hydrolysis which occurs prior to release of AdoMet from the enzyme. In Bifidobacterium adolescentis (strain ATCC 15703 / DSM 20083 / NCTC 11814 / E194a), this protein is S-adenosylmethionine synthase.